The primary structure comprises 344 residues: N-acetyl-gamma-glutamyl-phosphate reductase (344 aa).

The active site involves Cys149.

Belongs to the NAGSA dehydrogenase family. Type 1 subfamily.

The protein resides in the cytoplasm. It carries out the reaction N-acetyl-L-glutamate 5-semialdehyde + phosphate + NADP(+) = N-acetyl-L-glutamyl 5-phosphate + NADPH + H(+). It functions in the pathway amino-acid biosynthesis; L-arginine biosynthesis; N(2)-acetyl-L-ornithine from L-glutamate: step 3/4. In terms of biological role, catalyzes the NADPH-dependent reduction of N-acetyl-5-glutamyl phosphate to yield N-acetyl-L-glutamate 5-semialdehyde. This is N-acetyl-gamma-glutamyl-phosphate reductase from Shouchella clausii (strain KSM-K16) (Alkalihalobacillus clausii).